Consider the following 139-residue polypeptide: Dehydrin DHN1 (139 aa).

Positions 1–139 (MEYQGQHGHA…IKEKLPGGQH (139 aa)) are disordered. The segment covering 23 to 42 (GHGGFTGGPTGTHGAAGVGG) has biased composition (gly residues). Residues 49 to 58 (RDGHKTDGVL) show a composition bias toward basic and acidic residues. Residues 59–68 (RRSGSSSSSS) show a composition bias toward low complexity. Over residues 83–98 (KEKIKEKLPGGAHKDA) the composition is skewed to basic and acidic residues. Residues 99–109 (AGQQQQTAMAG) show a composition bias toward low complexity. Residues 120-139 (TGEKKGVMDKIKEKLPGGQH) show a composition bias toward basic and acidic residues.

The protein belongs to the plant dehydrin family.

The chain is Dehydrin DHN1 (DHN1) from Hordeum vulgare (Barley).